The chain runs to 517 residues: MLSRLMSGSSRSLEREYSCTVRLLDDSEYTCTIQRDAKGQYLFDLLCHHLNLLEKDYFGIRFVDPDKQRHWLEFTKSVVKQLRSQPPFTMCFRVKFYPADPAALKEEITRYLVFLQIKRDLYHGRLLCKTSDAALLAAYILQAEIGDYDPGKHPEGYSSKFQFFPKHSEKLEKKIAEIHKTELSGQTPATSELNFLRKAQTLETYGVDPHPCKDVSGNAAFLAFTPFGFVVLQGNKRVHFIKWNEVTKLKFEGKTFYLYVSQKEEKKIILTYFAPTPEACKHLWKCGIENQAFYKLEKSSQVRTVSSSNLFFKGSRFRYSGRVAKEVMESSAKIKREPPEIHRAGMVPSRSCPSITHGPRLSSVPRTRRRAVHISIMEGLESLRDSAHSTPVRSSSHGDTFLPHVRSSRADSNERVAVIADEAYSPADSVLPTPVAEHSLELMLLSRQINGATCSIEEEKESEASTPTATEAEALGGELRALCQGHGGSEQEQRVHLKGPQLQQQQWKGWGKSVPLD.

The FERM domain occupies 17–298; that stretch reads YSCTVRLLDD…ENQAFYKLEK (282 aa). The tract at residues 308–353 is interaction with ROCK1; the sequence is SNLFFKGSRFRYSGRVAKEVMESSAKIKREPPEIHRAGMVPSRSCP. Positions 344–367 are disordered; it reads AGMVPSRSCPSITHGPRLSSVPRT. Residue Ser375 is modified to Phosphoserine. Disordered stretches follow at residues 385–408 and 485–517; these read DSAH…VRSS and GHGG…VPLD. Residues 388-398 are compositionally biased toward polar residues; it reads HSTPVRSSSHG. The segment covering 498-517 has biased composition (low complexity); sequence KGPQLQQQQWKGWGKSVPLD.

In terms of assembly, interacts with CTNND1, ITGB5 (via cytoplasmic domain) and ROCK1.

Its subcellular location is the cell junction. The protein localises to the adherens junction. Its function is as follows. May be involved in regulation of cell migration. May regulate cell-matrix interactions via its interaction with ITGB5 and modifying ITGB5 cytoplasmic tail interactions such as with FERMT2 and TLN1. May regulate ROCK1 kinase activity possibly involved in regulation of actin stress fiber formation. The sequence is that of FERM domain-containing protein 5 (Frmd5) from Mus musculus (Mouse).